The primary structure comprises 263 residues: Glutamate racemase (263 aa).

Substrate contacts are provided by residues 13–14 and 45–46; these read DS and YG. Catalysis depends on C77, which acts as the Proton donor/acceptor. Position 78-79 (78-79) interacts with substrate; sequence NT. Catalysis depends on C185, which acts as the Proton donor/acceptor. Substrate is bound at residue 186-187; sequence TH.

It belongs to the aspartate/glutamate racemases family.

The catalysed reaction is L-glutamate = D-glutamate. It functions in the pathway cell wall biogenesis; peptidoglycan biosynthesis. Its function is as follows. Provides the (R)-glutamate required for cell wall biosynthesis. The polypeptide is Glutamate racemase (Vibrio vulnificus (strain CMCP6)).